Here is a 242-residue protein sequence, read N- to C-terminus: MKTISFNFNQFHQNEEQLKLQRDARISSNSVLELTKVVNGVPTWNSTGRALYAKPVQVWDSTTGNVASFETRFSFSIRQPFPRPHPADGLVFFIAPPNTQTGEGGGYFGIYNPLSPYPFVAVEFDTFRNTWDPQIPHIGIDVNSVISTKTVPFTLDNGGIANVVIKYDASTKILHVVLVFPSLGTIYTIADIVDLKQVLPESVNVGFSAATGDPSGKQRNATETHDILSWSFSASLPGTNEF.

N-linked (GlcNAc...) asparagine glycosylation is found at asparagine 45 and asparagine 220.

The protein belongs to the leguminous lectin family.

Its function is as follows. Lectin. The protein is Basic agglutinin (WBAI) of Psophocarpus tetragonolobus (Winged bean).